Reading from the N-terminus, the 209-residue chain is Regulator of G-protein signaling 1 (209 aa).

Positions 18 to 42 are disordered; that stretch reads FFSASPKDSKEPSHSLLDDNKQKKR. The segment covering 24 to 38 has biased composition (basic and acidic residues); it reads KDSKEPSHSLLDDNK. The region spanning 85–200 is the RGS domain; sequence SLEKLLANQM…LKSNIYLNLL (116 aa).

Interacts with GNAI1 and GNAQ. In terms of tissue distribution, expressed in multiple tissues.

Its subcellular location is the cell membrane. It is found in the cytoplasm. The protein resides in the cytosol. Regulates G protein-coupled receptor signaling cascades, including signaling downstream of the N-formylpeptide chemoattractant receptors and leukotriene receptors. Inhibits B cell chemotaxis toward CXCL12. Inhibits signal transduction by increasing the GTPase activity of G protein alpha subunits, thereby driving them into their inactive GDP-bound form. This chain is Regulator of G-protein signaling 1 (Rgs1), found in Rattus norvegicus (Rat).